Here is a 35-residue protein sequence, read N- to C-terminus: uncharacterized protein (35 aa).

The helical transmembrane segment at 14-34 threads the bilayer; that stretch reads VVVLLAICGAMLLLRWAAMIW.

Its subcellular location is the membrane. This is an uncharacterized protein from Escherichia coli (strain K12).